Reading from the N-terminus, the 56-residue chain is Large ribosomal subunit protein bL33 (56 aa).

The protein belongs to the bacterial ribosomal protein bL33 family.

In Haemophilus influenzae (strain 86-028NP), this protein is Large ribosomal subunit protein bL33.